Consider the following 101-residue polypeptide: Small ribosomal subunit protein bS21 (101 aa).

The segment covering 36 to 52 (YEKPSEKKAREKAEAVR) has biased composition (basic and acidic residues). A disordered region spans residues 36 to 101 (YEKPSEKKAR…GPGAGPRGPR (66 aa)). The segment covering 53–62 (RARKLARKKL) has biased composition (basic residues). Residues 83–101 (PGAGGPGAGGPGAGPRGPR) show a composition bias toward gly residues.

This sequence belongs to the bacterial ribosomal protein bS21 family.

The protein is Small ribosomal subunit protein bS21 of Rhodopseudomonas palustris (strain HaA2).